The following is a 273-amino-acid chain: Formamidopyrimidine-DNA glycosylase (273 aa).

Catalysis depends on P2, which acts as the Schiff-base intermediate with DNA. The active-site Proton donor is the E3. K59 acts as the Proton donor; for beta-elimination activity in catalysis. Residues H92 and R111 each coordinate DNA. The FPG-type zinc finger occupies 239-273 (KVYGKTDEPCVVCGTPIEKIKLNGRGTHFCPNCQK). Catalysis depends on R263, which acts as the Proton donor; for delta-elimination activity.

The protein belongs to the FPG family. In terms of assembly, monomer. It depends on Zn(2+) as a cofactor.

It catalyses the reaction Hydrolysis of DNA containing ring-opened 7-methylguanine residues, releasing 2,6-diamino-4-hydroxy-5-(N-methyl)formamidopyrimidine.. The enzyme catalyses 2'-deoxyribonucleotide-(2'-deoxyribose 5'-phosphate)-2'-deoxyribonucleotide-DNA = a 3'-end 2'-deoxyribonucleotide-(2,3-dehydro-2,3-deoxyribose 5'-phosphate)-DNA + a 5'-end 5'-phospho-2'-deoxyribonucleoside-DNA + H(+). Functionally, involved in base excision repair of DNA damaged by oxidation or by mutagenic agents. Acts as a DNA glycosylase that recognizes and removes damaged bases. Has a preference for oxidized purines, such as 7,8-dihydro-8-oxoguanine (8-oxoG). Has AP (apurinic/apyrimidinic) lyase activity and introduces nicks in the DNA strand. Cleaves the DNA backbone by beta-delta elimination to generate a single-strand break at the site of the removed base with both 3'- and 5'-phosphates. The sequence is that of Formamidopyrimidine-DNA glycosylase from Listeria monocytogenes serovar 1/2a (strain ATCC BAA-679 / EGD-e).